The following is a 143-amino-acid chain: Ribonuclease H (143 aa).

An RNase H type-1 domain is found at 1–136 (MQEIEIFCDG…CDSLAKLEAQ (136 aa)). Positions 9, 47, 69, and 128 each coordinate Mg(2+).

This sequence belongs to the RNase H family. In terms of assembly, monomer. It depends on Mg(2+) as a cofactor.

It is found in the cytoplasm. It carries out the reaction Endonucleolytic cleavage to 5'-phosphomonoester.. Functionally, endonuclease that specifically degrades the RNA of RNA-DNA hybrids. In Helicobacter pylori (strain HPAG1), this protein is Ribonuclease H.